Reading from the N-terminus, the 116-residue chain is Large ribosomal subunit protein bL17 (116 aa).

Belongs to the bacterial ribosomal protein bL17 family. In terms of assembly, part of the 50S ribosomal subunit. Contacts protein L32.

This Chloroflexus aggregans (strain MD-66 / DSM 9485) protein is Large ribosomal subunit protein bL17.